The chain runs to 122 residues: Cupin 2 conserved barrel domain-containing protein (122 aa).

A cupin 2 conserved barrel region spans residues 55-119; the sequence is PGGVTTAEDH…DSPVEIVSIW (65 aa). Zn(2+) is bound by residues Asp63, His65, Glu69, and His103.

It depends on Zn(2+) as a cofactor.

The enzyme catalyses N(6)-hydroxy-L-lysine + L-glutamate + ATP = 1-L-glutamo-2-N(6-)L-lysinohydrazine + AMP + diphosphate + 2 H(+). With respect to regulation, inhibited by 1,10-phenanthroline (OP). Its function is as follows. Catalyzes hydrazine (N-N) bond formation from an unstable ester intermediate, the product of the ATP-dependent condensation of L-N(6)-OH-lysine and L-glutamine substrates by a methionyl-tRNA synthase-like protein. This Rhodococcus jostii (strain RHA1) protein is Cupin 2 conserved barrel domain-containing protein.